A 406-amino-acid chain; its full sequence is MKQAGFPLGILLLFWVSYVTDFSLVLLIKGGALSGTDTYQSLVNKTFGFPGYLLLSVLQFLYPFIAMISYNIIAGDTLSKVFQRIPGVDPENVFIGRHFIIGLSTVTFTLPLSLYRNIAKLGKVSLISTGLTTLILGIVMARAISLGPHIPKTEDAWVFAKPNAIQAVGVMSFAFICHHNSFLVYSSLEEPTVAKWSRLIHMSIVISVFICIFFATCGYLTFTGFTQGDLFENYCRNDDLVTFGRFCYGVTVILTYPMECFVTREVIANVFFGGNLSSVFHIVVTVMVITVATLVSLLIDCLGIVLELNGVLCATPLIFIIPSACYLKLSEEPRTHSDKIMSCVMLPIGAVVMVFGFVMAITNTQDCTHGQEMFYCFPDNFSLTNTSESHVQQTTQLSTLNISIFQ.

At 1 to 7 (MKQAGFP) the chain is on the cytoplasmic side. Residues 8 to 28 (LGILLLFWVSYVTDFSLVLLI) traverse the membrane as a helical segment. An N-linked (GlcNAc...) asparagine glycan is attached at Asn44. Transmembrane regions (helical) follow at residues 48-68 (GFPG…IAMI), 93-113 (VFIG…LPLS), 121-141 (LGKV…IVMA), 156-176 (AWVF…FAFI), 202-222 (MSIV…YLTF), and 241-263 (VTFG…CFVT). A glycan (N-linked (GlcNAc...) asparagine) is linked at Asn275. A run of 3 helical transmembrane segments spans residues 279–299 (VFHI…SLLI), 301–321 (CLGI…IFII), and 340–360 (IMSC…FVMA).

Belongs to the amino acid/polyamine transporter 2 family.

The protein localises to the membrane. Its function is as follows. Putative sodium-dependent amino acid/proton antiporter. In Homo sapiens (Human), this protein is Putative sodium-coupled neutral amino acid transporter 11 (SLC38A11).